Consider the following 167-residue polypeptide: Insertion element IS1 4 protein InsB (167 aa).

The protein belongs to the transposase 27 family.

Its function is as follows. Absolutely required for transposition of IS1. This is Insertion element IS1 4 protein InsB (insB4) from Escherichia coli (strain K12).